A 195-amino-acid chain; its full sequence is MHFSSCVLVSALAIVTNVATASPPPLHQLSRPALKDSTIFRSTVHCADCPEGNCYKCTLGHNNTLIANTGGMAYLRALVGFQLPVPAKKVKQCTVQFPAFVKLMEAPINITVSEAKSNDWDEDTVTGENAPDSGEPFSTSHVPALTNPPALDATEACKNAAENGDFSIYVGAQFGRFEIWSKDSGNPAILHTYYK.

Positions 1–21 (MHFSSCVLVSALAIVTNVATA) are cleaved as a signal peptide. 2 N-linked (GlcNAc...) asparagine glycosylation sites follow: Asn-62 and Asn-109. The disordered stretch occupies residues 119 to 141 (DWDEDTVTGENAPDSGEPFSTSH).

Its subcellular location is the secreted. This is an uncharacterized protein from Arthroderma benhamiae (strain ATCC MYA-4681 / CBS 112371) (Trichophyton mentagrophytes).